A 421-amino-acid chain; its full sequence is MMNSIENEEFIPILLGSDMNVYGMARSFNEAYGKICQAYASDQLAPTRYSKIVNVEVIPGFDKDPVFIETMLRLAKERYSDKSKKYLLIACGDGYAELISQHKQELSEYFICPYIDYSLFERLINKVSFYEVCEEYDLPYPKTLIVREEMLVNGHLEQELPFEFPVALKPANSVEYLSVQFEGRKKAFILETREEFDLILGRIYEAGYKSEMIVQDFIPGDDSNMRVLNAYVDEDHQVRMMCLGHPLLEDPTPASIGNYVVIMPDYNEKIYQTIKAFLEKIEYTGFANFDMKYDPRDGEYKLFEINLRQGRSSFFVTLNGLNLARFVTEDRVFNKPFVETTYGTNQSDKARLWMGVPKKIFLEYARENEDKKLAEQMIKENRYGTTVFYEKDRSIKRWLLMKYMFHNYIPRFKKYFHVKEG.

Residues 130–332 (YEVCEEYDLP…LARFVTEDRV (203 aa)) enclose the ATP-grasp domain. Position 161 to 224 (161 to 224 (PFEFPVALKP…QDFIPGDDSN (64 aa))) interacts with ATP. D290, E304, and N306 together coordinate Mg(2+).

The cofactor is Mg(2+).

It carries out the reaction [beta-GlcNAc-(1-&gt;4)-Mur2Ac(oyl-L-Ala-gamma-D-Glu-L-Lys-D-Ala-D-Ala)](n) + n D-aspartate + n ATP = [beta-GlcNAc-(1-&gt;4)-Mur2Ac(oyl-L-Ala-gamma-D-Glu-6-N-(beta-D-Asp)-L-Lys-D-Ala-D-Ala)]n + n ADP + n phosphate + n H(+). It participates in cell wall biogenesis; peptidoglycan biosynthesis. Functionally, catalyzes the addition of D-aspartate onto the lysine residue in the peptidoglycan precursor UDP-MurNAc-pentapeptide. The ligation occurs between the beta-carboxylate of D-Asp and the epsilon-amino group of L-Lys. Is highly specific for D-aspartate, as L-aspartate, D-glutamate, D-alanine, D-iso-asparagine and D-malate are not substrates. In Enterococcus faecium (strain Aus0004), this protein is D-aspartate ligase.